A 454-amino-acid chain; its full sequence is Maintenance of mitochondrial morphology protein 1 (454 aa).

The Lumenal portion of the chain corresponds to 1-117; that stretch reads MESNYTGMDG…SFSSWSFAQG (117 aa). A helical transmembrane segment spans residues 118–138; sequence LIVGQVSVVLVLIFFIKFFIF. Residues 139-454 lie on the Cytoplasmic side of the membrane; sequence SDSSTKTNPN…ESEPGRETHY (316 aa). The segment at 144 to 164 is disordered; the sequence is KTNPNPAKNSSSTNSLSGLSS. Residues 153–164 show a composition bias toward low complexity; it reads SSSTNSLSGLSS. The region spanning 215-427 is the SMP-LTD domain; sequence PAESLDWFNV…EPRFQFIKLP (213 aa). Residues R253, W411, R415, W430, R432, and S433 each contribute to the a 1,2-diacyl-sn-glycero-3-phosphate site. Positions 434-454 are disordered; sequence KNTREGKADVDESEPGRETHY. A compositionally biased stretch (basic and acidic residues) spans 435-454; that stretch reads NTREGKADVDESEPGRETHY.

Belongs to the MMM1 family. Homodimer. Component of the ER-mitochondria encounter structure (ERMES) or MDM complex, composed of MMM1, MDM10, MDM12 and MDM34. An MMM1 homodimer associates with one molecule of MDM12 on each side in a pairwise head-to-tail manner, and the SMP-LTD domains of MMM1 and MDM12 generate a continuous hydrophobic tunnel for phospholipid trafficking.

The protein localises to the endoplasmic reticulum membrane. Component of the ERMES/MDM complex, which serves as a molecular tether to connect the endoplasmic reticulum (ER) and mitochondria. Components of this complex are involved in the control of mitochondrial shape and protein biogenesis, and function in nonvesicular lipid trafficking between the ER and mitochondria. Preferentially binds to glycerophospholipids such as phosphatidylcholoine (PC), phosphatidic acid (PA), phosphatidylglycerol (PG), and phosphatidylserine (PS), but not to phosphatidylethanolamine (PE). The MDM12-MMM1 subcomplex functions in the major beta-barrel assembly pathway that is responsible for biogenesis of all outer membrane beta-barrel proteins, and acts in a late step after the SAM complex. The MDM10-MDM12-MMM1 subcomplex further acts in the TOM40-specific pathway after the action of the MDM12-MMM1 complex. Essential for establishing and maintaining the structure of mitochondria and maintenance of mtDNA nucleoids. The protein is Maintenance of mitochondrial morphology protein 1 of Zygosaccharomyces rouxii (strain ATCC 2623 / CBS 732 / NBRC 1130 / NCYC 568 / NRRL Y-229).